We begin with the raw amino-acid sequence, 227 residues long: LysM and putative peptidoglycan-binding domain-containing protein 1 (227 aa).

Positions 1 to 11 are enriched in pro residues; that stretch reads MASPSRQPPPG. The disordered stretch occupies residues 1–22; that stretch reads MASPSRQPPPGGSGLLQGSRAR. Ser-23 and Ser-33 each carry phosphoserine. Positions 40-84 constitute a LysM domain; the sequence is LEHQLEPGDTLAGLALKYGVTMEQIKRANRLYTNDSIFLKKTLYI. The interval 97–150 is disordered; sequence LDSEEEKDGEEKVHPSNSEVWPHSTERKKQETGAGRANGEVLPTPGQETPTPIH. Phosphoserine occurs at positions 99, 166, 194, and 212.

This is LysM and putative peptidoglycan-binding domain-containing protein 1 (LYSMD1) from Homo sapiens (Human).